The following is a 359-amino-acid chain: DNA replication and repair protein RecF (359 aa).

30 to 37 (GQNAQGKT) is a binding site for ATP.

This sequence belongs to the RecF family.

The protein localises to the cytoplasm. Functionally, the RecF protein is involved in DNA metabolism; it is required for DNA replication and normal SOS inducibility. RecF binds preferentially to single-stranded, linear DNA. It also seems to bind ATP. This chain is DNA replication and repair protein RecF, found in Lactococcus lactis subsp. cremoris (strain SK11).